The sequence spans 310 residues: Olfactory receptor 5AR1 (310 aa).

Residues 1 to 25 (MDKENHSVVTEFVFMGITQDPQLQI) lie on the Extracellular side of the membrane. A glycan (N-linked (GlcNAc...) asparagine) is linked at asparagine 5. The helical transmembrane segment at 26 to 46 (IFFVVFLLVYLVNVIGNVGMI) threads the bilayer. The Cytoplasmic portion of the chain corresponds to 47-54 (ILIITDSQ). Residues 55-75 (LHTPMYFFLCNLSFVDLGYSS) form a helical membrane-spanning segment. The Extracellular segment spans residues 76-99 (AIAPRMLADFLTKHKVISFSSCAT). Cysteine 97 and cysteine 189 are oxidised to a cystine. The helical transmembrane segment at 100–120 (QFAFFVGFVDAECYVLAAMAY) threads the bilayer. Residues 121 to 133 (DRFVAICRPLHYS) lie on the Cytoplasmic side of the membrane. A helical transmembrane segment spans residues 134-154 (TLMSKKVCLVLMLGSYFAGLV). Over 155–196 (SLVAHTSLTFSLSYCGSNIINHFFCEIPPLLALSCSDTYISE) the chain is Extracellular. The helical transmembrane segment at 197 to 217 (ILLFSLCGFIEFSTILIIFIS) threads the bilayer. A Cu cation-binding site is contributed by cysteine 203. Residues 218-237 (YAFILIAIIRIRSAEGRLKA) lie on the Cytoplasmic side of the membrane. The helical transmembrane segment at 238 to 258 (FSTCGSHLTGVTLFYGTVMFM) threads the bilayer. 2 residues coordinate Cu cation: methionine 256 and arginine 261. Over 259 to 271 (YLRPTSSYSLDQD) the chain is Extracellular. A helical membrane pass occupies residues 272-292 (KWASVFYTIIIPMLNPLIYSL). Topologically, residues 293–310 (RNKDVKAAFKKLIGKKPQ) are cytoplasmic.

This sequence belongs to the G-protein coupled receptor 1 family.

It is found in the cell membrane. Copper binding enhances receptor activity in response to odorant binding. Its function is as follows. Olfactory receptor that is activated by the binding of organosulfur odorants with thioether groups such as (methylthio)methanethiol (MTMT). The activity of this receptor is mediated by G proteins which activate adenylyl cyclase. The polypeptide is Olfactory receptor 5AR1 (Mus musculus (Mouse)).